The primary structure comprises 396 residues: Ribosomal RNA large subunit methyltransferase I (396 aa).

Residues 2 to 81 (SVRLVLAKGR…ETIDIAFFTR (80 aa)) form the PUA domain.

This sequence belongs to the methyltransferase superfamily. RlmI family.

The protein resides in the cytoplasm. The catalysed reaction is cytidine(1962) in 23S rRNA + S-adenosyl-L-methionine = 5-methylcytidine(1962) in 23S rRNA + S-adenosyl-L-homocysteine + H(+). Its function is as follows. Specifically methylates the cytosine at position 1962 (m5C1962) of 23S rRNA. In Cronobacter sakazakii (strain ATCC BAA-894) (Enterobacter sakazakii), this protein is Ribosomal RNA large subunit methyltransferase I.